The primary structure comprises 389 residues: Chalcone synthase A (389 aa).

The active site involves Cys164.

The protein belongs to the thiolase-like superfamily. Chalcone/stilbene synthases family. Major expressed member of the gene family in various floral tissues and in seedlings treated with UV light. It is relatively low expressed in tissue culture material.

It carries out the reaction (E)-4-coumaroyl-CoA + 3 malonyl-CoA + 3 H(+) = 2',4,4',6'-tetrahydroxychalcone + 3 CO2 + 4 CoA. It functions in the pathway secondary metabolite biosynthesis; flavonoid biosynthesis. Functionally, the primary product of this enzyme is 4,2',4',6'-tetrahydroxychalcone (also termed naringenin-chalcone or chalcone) which can under specific conditions spontaneously isomerize into naringenin. The sequence is that of Chalcone synthase A (CHSA) from Petunia hybrida (Petunia).